A 199-amino-acid chain; its full sequence is Shikimate kinase (199 aa).

Residue 34–39 (GAGKTA) participates in ATP binding. Position 38 (threonine 38) interacts with Mg(2+). Substrate contacts are provided by aspartate 56, arginine 80, and glycine 102. Arginine 140 is an ATP binding site. Arginine 159 is a binding site for substrate.

Belongs to the shikimate kinase family. As to quaternary structure, monomer. It depends on Mg(2+) as a cofactor.

It is found in the cytoplasm. The catalysed reaction is shikimate + ATP = 3-phosphoshikimate + ADP + H(+). It participates in metabolic intermediate biosynthesis; chorismate biosynthesis; chorismate from D-erythrose 4-phosphate and phosphoenolpyruvate: step 5/7. In terms of biological role, catalyzes the specific phosphorylation of the 3-hydroxyl group of shikimic acid using ATP as a cosubstrate. This Cereibacter sphaeroides (strain ATCC 17023 / DSM 158 / JCM 6121 / CCUG 31486 / LMG 2827 / NBRC 12203 / NCIMB 8253 / ATH 2.4.1.) (Rhodobacter sphaeroides) protein is Shikimate kinase.